Consider the following 473-residue polypeptide: MKRRVGGLETEYGLVCVRADGSRALEPEAAARELFRPVVAMGRSSNVFLRNAARLYLDVGSHPEYATAECDDWWELVAQDRAGDRMFAELAAEATERLAADGQDARIHLLKNNVDSAGNAFGSHENYLVDRRGEFTRLPRYLLPFLVTRQIVTGAGGVVRPAPADGAPEQEAGPAQFVFSRRSDHMWEAVSSATTRTRPIINTRDEPHGDPTRFRRLHVIVGDSTMSEVSTHLRFATTDLVLRAIESGRALPELALHDDIAAIRAVARDLTGTTAIPTADGGTTTAIEVQQRWLDHVTEFADESEQDVLETWQRGIDAVRTGDRSWAATHLDWAIKERLFHQVAERRGVDLGDPAIERLDLAYHDIDPTQSVFAALQRRGLAPQVLDEQRIERARTTAPTTTRAHLRGQVVTAAQEHGVDHVVDWTTLRLTRPGAMPVQVLDPFATELPAVDALLEEIRASAAGAPESPPPFA.

Mg(2+) is bound at residue Glu-9. Arg-54 is an ATP binding site. Mg(2+) is bound at residue Tyr-56. The active-site Proton acceptor is the Asp-58. Glu-64 contributes to the Mg(2+) binding site. The ATP site is built by Thr-67 and Trp-425.

The protein belongs to the Pup ligase/Pup deamidase family. Pup-conjugating enzyme subfamily.

The enzyme catalyses ATP + [prokaryotic ubiquitin-like protein]-L-glutamate + [protein]-L-lysine = ADP + phosphate + N(6)-([prokaryotic ubiquitin-like protein]-gamma-L-glutamyl)-[protein]-L-lysine.. It functions in the pathway protein degradation; proteasomal Pup-dependent pathway. Its pathway is protein modification; protein pupylation. In terms of biological role, catalyzes the covalent attachment of the prokaryotic ubiquitin-like protein modifier Pup to the proteasomal substrate proteins, thereby targeting them for proteasomal degradation. This tagging system is termed pupylation. The ligation reaction involves the side-chain carboxylate of the C-terminal glutamate of Pup and the side-chain amino group of a substrate lysine. The chain is Pup--protein ligase from Brachybacterium faecium (strain ATCC 43885 / DSM 4810 / JCM 11609 / LMG 19847 / NBRC 14762 / NCIMB 9860 / 6-10).